Here is a 264-residue protein sequence, read N- to C-terminus: GTP cyclohydrolase FolE2 (264 aa).

This sequence belongs to the GTP cyclohydrolase IV family.

The catalysed reaction is GTP + H2O = 7,8-dihydroneopterin 3'-triphosphate + formate + H(+). It participates in cofactor biosynthesis; 7,8-dihydroneopterin triphosphate biosynthesis; 7,8-dihydroneopterin triphosphate from GTP: step 1/1. Converts GTP to 7,8-dihydroneopterin triphosphate. This Akkermansia muciniphila (strain ATCC BAA-835 / DSM 22959 / JCM 33894 / BCRC 81048 / CCUG 64013 / CIP 107961 / Muc) protein is GTP cyclohydrolase FolE2.